Here is a 181-residue protein sequence, read N- to C-terminus: Oligoribonuclease (181 aa).

The Exonuclease domain maps to 8–171 (LIWIDLEMTG…DDIRESIAEL (164 aa)). Residue tyrosine 129 is part of the active site.

This sequence belongs to the oligoribonuclease family.

It localises to the cytoplasm. 3'-to-5' exoribonuclease specific for small oligoribonucleotides. This Vibrio cholerae serotype O1 (strain ATCC 39541 / Classical Ogawa 395 / O395) protein is Oligoribonuclease.